Reading from the N-terminus, the 521-residue chain is Probable feruloyl esterase B (521 aa).

An N-terminal signal peptide occupies residues 1-17; the sequence is MKVSSLLSVALPGAALA. 2 cysteine pairs are disulfide-bonded: C26/C72 and C61/C111. Residues N37, N51, N77, N95, N144, and N177 are each glycosylated (N-linked (GlcNAc...) asparagine). 3 disulfide bridges follow: C184–C438, C253–C270, and C279–C288. S185 serves as the catalytic Acyl-ester intermediate. Ca(2+) contacts are provided by D254, D257, A259, D261, and I263. N-linked (GlcNAc...) asparagine glycosylation is found at N284, N347, N352, and N378. Catalysis depends on charge relay system residues D397 and H437. N-linked (GlcNAc...) asparagine glycosylation is found at N488 and N511. Residues C498 and C520 are joined by a disulfide bond.

This sequence belongs to the tannase family.

Its subcellular location is the secreted. It catalyses the reaction feruloyl-polysaccharide + H2O = ferulate + polysaccharide.. In terms of biological role, involved in degradation of plant cell walls. Hydrolyzes the feruloyl-arabinose ester bond in arabinoxylans as well as the feruloyl-galactose and feruloyl-arabinose ester bonds in pectin. The polypeptide is Probable feruloyl esterase B (faeB) (Aspergillus niger (strain ATCC MYA-4892 / CBS 513.88 / FGSC A1513)).